The following is a 139-amino-acid chain: Probable DNA-binding protein (139 aa).

Positions 97 to 139 are disordered; it reads DEPSREASPDLGAAGAELEDESAQAGAVQGPETLRSQVLRART.

This Homo sapiens (Human) protein is Probable DNA-binding protein.